Here is a 667-residue protein sequence, read N- to C-terminus: Protein adenylyltransferase SelO, mitochondrial (667 aa).

Residues 1–6 (MASVRA) constitute a mitochondrion transit peptide. 7 residues coordinate ATP: Gly-154, Gly-156, Lys-177, Asp-189, Gly-190, Arg-247, and Arg-254. Asp-341 serves as the catalytic Proton acceptor. Asn-342 and Asp-351 together coordinate Mg(2+). Asp-351 is a binding site for ATP. Positions 628-652 (YHSEEEATGPEAVARSTEEQSSYSN) are disordered. Thr-635 is subject to Phosphothreonine. Ser-651 bears the Phosphoserine mark. Residue Sec-665 is a non-standard amino acid, selenocysteine.

This sequence belongs to the SELO family. It depends on Mg(2+) as a cofactor.

It is found in the mitochondrion. The catalysed reaction is L-tyrosyl-[protein] + ATP = O-(5'-adenylyl)-L-tyrosyl-[protein] + diphosphate. The enzyme catalyses L-threonyl-[protein] + ATP = 3-O-(5'-adenylyl)-L-threonyl-[protein] + diphosphate. It carries out the reaction L-seryl-[protein] + ATP = 3-O-(5'-adenylyl)-L-seryl-[protein] + diphosphate. Catalyzes the transfer of adenosine 5'-monophosphate (AMP) to Ser, Thr and Tyr residues of target proteins (AMPylation). May be a redox-active mitochondrial selenoprotein which interacts with a redox target protein. In Mus musculus (Mouse), this protein is Protein adenylyltransferase SelO, mitochondrial.